A 105-amino-acid polypeptide reads, in one-letter code: Dynein axonemal light chain 4 (105 aa).

The protein belongs to the dynein light chain family. As to quaternary structure, consists of at least two heavy chains and a number of intermediate and light chains.

The protein localises to the cytoplasm. Its subcellular location is the cytoskeleton. The protein resides in the cilium axoneme. Force generating protein of respiratory cilia. Produces force towards the minus ends of microtubules. Dynein has ATPase activity. This Mus musculus (Mouse) protein is Dynein axonemal light chain 4 (Dnal4).